A 100-amino-acid polypeptide reads, in one-letter code: Urease subunit gamma (100 aa).

Belongs to the urease gamma subunit family. As to quaternary structure, heterotrimer of UreA (gamma), UreB (beta) and UreC (alpha) subunits. Three heterotrimers associate to form the active enzyme.

It is found in the cytoplasm. The catalysed reaction is urea + 2 H2O + H(+) = hydrogencarbonate + 2 NH4(+). The protein operates within nitrogen metabolism; urea degradation; CO(2) and NH(3) from urea (urease route): step 1/1. This Enterobacter sp. (strain 638) protein is Urease subunit gamma.